The chain runs to 139 residues: Peptide methionine sulfoxide reductase MsrB (139 aa).

The 123-residue stretch at 9-131 (TPSDNTELTE…NSASLSFIDD (123 aa)) folds into the MsrB domain. Zn(2+) contacts are provided by Cys48, Cys51, Cys97, and Cys100. The active-site Nucleophile is Cys120.

This sequence belongs to the MsrB Met sulfoxide reductase family. Zn(2+) serves as cofactor.

The enzyme catalyses L-methionyl-[protein] + [thioredoxin]-disulfide + H2O = L-methionyl-(R)-S-oxide-[protein] + [thioredoxin]-dithiol. This Pectobacterium carotovorum subsp. carotovorum (strain PC1) protein is Peptide methionine sulfoxide reductase MsrB.